The sequence spans 215 residues: Small ribosomal subunit protein uS3 (215 aa).

Residues 39-107 form the KH type-2 domain; it reads VRQYLQKKLA…PVHINIEEIR (69 aa).

Belongs to the universal ribosomal protein uS3 family. In terms of assembly, part of the 30S ribosomal subunit. Forms a tight complex with proteins S10 and S14.

Its function is as follows. Binds the lower part of the 30S subunit head. Binds mRNA in the 70S ribosome, positioning it for translation. The protein is Small ribosomal subunit protein uS3 of Nitrosomonas europaea (strain ATCC 19718 / CIP 103999 / KCTC 2705 / NBRC 14298).